Reading from the N-terminus, the 190-residue chain is Selenoprotein S (190 aa).

The helical transmembrane segment at 28-48 threads the bilayer; the sequence is SLLASYGWYILFSCILLYIVI. The interval 78 to 90 is VCP/p97-interacting motif (VIM); that stretch reads RQEALAAARLRMQ. The tract at residues 115–190 is disordered; that stretch reads KIEMWDSMQE…RRGPSSGGUN (76 aa). The span at 160 to 174 shows a compositional bias: gly residues; the sequence is RGGGYNPLTGEGGGT. Residue selenocysteine 189 is a non-standard amino acid, selenocysteine.

The protein belongs to the selenoprotein S family. As to quaternary structure, interacts with DERL1 and (via VIM motif) with VCP, suggesting that it forms a membrane complex with DERL1 that serves as a receptor for VCP. Also interacts with DERL2, DERL3 and SELENOK. The SELENOK-SELENOS complex interacts with VCP. Interacts with CCDC47. Truncated SELENOS proteins produced by failed UGA/Sec decoding are ubiquitinated by the CRL2(KLHDC2) and CRL2(KLHDC3) complexes, which recognizes the glycine (Gly) at the C-terminus of truncated SELENOS proteins. Truncated SELENOS proteins produced by failed UGA/Sec decoding are also ubiquitinated by the CRL5(KLHDC1) complex.

The protein localises to the endoplasmic reticulum membrane. The protein resides in the cytoplasm. In terms of biological role, involved in the degradation process of misfolded endoplasmic reticulum (ER) luminal proteins. Participates in the transfer of misfolded proteins from the ER to the cytosol, where they are destroyed by the proteasome in a ubiquitin-dependent manner. Probably acts by serving as a linker between DERL1, which mediates the retrotranslocation of misfolded proteins into the cytosol, and the ATPase complex VCP, which mediates the translocation and ubiquitination. In Mus musculus (Mouse), this protein is Selenoprotein S.